Reading from the N-terminus, the 182-residue chain is UPF0397 protein BCAH820_2657 (182 aa).

The next 5 membrane-spanning stretches (helical) occupy residues 9–29 (VVAIGIGSALYGILGLWGFTI), 40–60 (AILTVFGALFGPVAGLLIGLI), 71–91 (WGIWWGWVISSGIIGFTMGFI), 114–134 (ITGLIGIVIAIIFAGAFDIIV), and 142–162 (IVIQVLGATIADVIVFLVLGL).

Belongs to the UPF0397 family.

The protein resides in the cell membrane. The sequence is that of UPF0397 protein BCAH820_2657 from Bacillus cereus (strain AH820).